Here is a 237-residue protein sequence, read N- to C-terminus: 1-(5-phosphoribosyl)-5-[(5-phosphoribosylamino)methylideneamino] imidazole-4-carboxamide isomerase (237 aa).

The active-site Proton acceptor is the Asp8. Residue Asp129 is the Proton donor of the active site.

The protein belongs to the HisA/HisF family.

The protein resides in the cytoplasm. The catalysed reaction is 1-(5-phospho-beta-D-ribosyl)-5-[(5-phospho-beta-D-ribosylamino)methylideneamino]imidazole-4-carboxamide = 5-[(5-phospho-1-deoxy-D-ribulos-1-ylimino)methylamino]-1-(5-phospho-beta-D-ribosyl)imidazole-4-carboxamide. It participates in amino-acid biosynthesis; L-histidine biosynthesis; L-histidine from 5-phospho-alpha-D-ribose 1-diphosphate: step 4/9. This Clostridium botulinum (strain Alaska E43 / Type E3) protein is 1-(5-phosphoribosyl)-5-[(5-phosphoribosylamino)methylideneamino] imidazole-4-carboxamide isomerase.